The primary structure comprises 109 residues: Large ribosomal subunit protein uL22 (109 aa).

The protein belongs to the universal ribosomal protein uL22 family. As to quaternary structure, part of the 50S ribosomal subunit.

This protein binds specifically to 23S rRNA; its binding is stimulated by other ribosomal proteins, e.g. L4, L17, and L20. It is important during the early stages of 50S assembly. It makes multiple contacts with different domains of the 23S rRNA in the assembled 50S subunit and ribosome. In terms of biological role, the globular domain of the protein is located near the polypeptide exit tunnel on the outside of the subunit, while an extended beta-hairpin is found that lines the wall of the exit tunnel in the center of the 70S ribosome. This is Large ribosomal subunit protein uL22 from Dehalococcoides mccartyi (strain ATCC BAA-2266 / KCTC 15142 / 195) (Dehalococcoides ethenogenes (strain 195)).